Here is a 389-residue protein sequence, read N- to C-terminus: Large envelope protein (389 aa).

Position 1 is an N-acetylmethionine (methionine 1). Glycine 2 carries the N-myristoyl glycine; by host lipid modification. The interval 2-108 is pre-S1; sequence GTNLSVPNPL…PPLRDSHPQA (107 aa). A pre-S region spans residues 2–163; it reads GTNLSVPNPL…FSRTGDPAPN (162 aa). The Virion surface; in external conformation segment spans residues 2–170; that stretch reads GTNLSVPNPL…APNMESTTSG (169 aa). At 2-242 the chain is on the intravirion; in internal conformation side; the sequence is GTNLSVPNPL…PGYRWMCLRR (241 aa). The tract at residues 74–105 is disordered; the sequence is LTTVPAAPPPASTNRQSGRQPTPISPPLRDSH. Polar residues predominate over residues 85–95; it reads STNRQSGRQPT. The segment at 109–163 is pre-S2; it reads MQWNSTTFHQALLDPRVRGLYFPAGGSSSGTVNPVPTIVSPISSIFSRTGDPAPN. The helical transmembrane segment at 171 to 191 threads the bilayer; sequence FLGPLLVLQAGFFLLTRILTI. The Intravirion; in external conformation segment spans residues 192–242; the sequence is PQSLDSWWTSLNFLGEAPTCPGQNSQSPTSNHSPTSCPPICPGYRWMCLRR. The chain crosses the membrane as a helical span at residues 243-263; the sequence is FIIFLFILLLCLIFLLVLLDY. At 264 to 337 the chain is on the virion surface side; it reads QGMLPVCPLL…WASVRFSWLS (74 aa). Asparagine 309 is a glycosylation site (N-linked (GlcNAc...) asparagine; by host). A helical membrane pass occupies residues 338-358; it reads LLVPFVQWFAGLSPTVWLSVI. Over 359–364 the chain is Intravirion; the sequence is WMMWYW. A helical membrane pass occupies residues 365-387; it reads GPSLYNILSPFLPLLPIFFCLWV. The Virion surface segment spans residues 388–389; that stretch reads YI.

It belongs to the orthohepadnavirus major surface antigen family. In its internal form (Li-HBsAg), interacts with the capsid protein and with the isoform S. Interacts with host chaperone CANX. As to quaternary structure, associates with host chaperone CANX through its pre-S2 N glycan; this association may be essential for isoform M proper secretion. In terms of assembly, interacts with isoform L. Interacts with the antigens of satellite virus HDV (HDVAgs); this interaction is required for encapsidation of HDV genomic RNA. Post-translationally, isoform M is N-terminally acetylated by host at a ratio of 90%, and N-glycosylated by host at the pre-S2 region. In terms of processing, myristoylated.

The protein resides in the virion membrane. In terms of biological role, the large envelope protein exists in two topological conformations, one which is termed 'external' or Le-HBsAg and the other 'internal' or Li-HBsAg. In its external conformation the protein attaches the virus to cell receptors and thereby initiating infection. This interaction determines the species specificity and liver tropism. This attachment induces virion internalization predominantly through caveolin-mediated endocytosis. The large envelope protein also assures fusion between virion membrane and endosomal membrane. In its internal conformation the protein plays a role in virion morphogenesis and mediates the contact with the nucleocapsid like a matrix protein. Its function is as follows. The middle envelope protein plays an important role in the budding of the virion. It is involved in the induction of budding in a nucleocapsid independent way. In this process the majority of envelope proteins bud to form subviral lipoprotein particles of 22 nm of diameter that do not contain a nucleocapsid. This Hepatitis B virus genotype C subtype adr (isolate Japan/A4/1994) (HBV-C) protein is Large envelope protein.